The primary structure comprises 412 residues: Branched-chain alpha-ketoacid dehydrogenase kinase (412 aa).

A mitochondrion-targeting transit peptide spans 1-30; the sequence is MILASVLGSGPRGGPPLRPLLGPALSLRAR. S31 carries the phosphoserine modification. Position 52 is a phosphoserine; by autocatalysis (S52). Positions 159-404 constitute a Histidine kinase domain; the sequence is LDDHKDVVTL…DVYLRLRHID (246 aa). K192 and K233 each carry N6-acetyllysine. Positions 279 and 315 each coordinate ATP. N279 contributes to the Mg(2+) binding site. K(+) contacts are provided by V328, D330, and F333. Residues T334 and T335 each contribute to the ATP site. A phosphoserine mark is found at S356 and S360. Residues H364, G367, and L370 each contribute to the ATP site. G367 is a binding site for K(+).

It belongs to the PDK/BCKDK protein kinase family. Homodimer. Homotetramer. Dimerizes through interaction of two opposing nucleotide-binding domains. Interacts with E2 component of the branched-chain alpha-ketoacid dehydrogenase (BCKDH) complex. Competes with BCKDK for binding to the E2 component; this interaction is modulated by branched-chain alpha-keto acids. At steady state, BCKDH holoenzyme contains BCKDK and BCKDHA is phosphorylated. In response to high levels of branched-chain alpha-keto acids, the inhibitory BCKDK is replaced by activating PPM1K leading to BCKDHA dephosphorylation and BCAA degradation. Post-translationally, autophosphorylated.

The protein resides in the mitochondrion matrix. Its subcellular location is the mitochondrion. It carries out the reaction L-seryl-[3-methyl-2-oxobutanoate dehydrogenase] + ATP = O-phospho-L-seryl-[3-methyl-2-oxobutanoate dehydrogenase] + ADP + H(+). The catalysed reaction is L-seryl-[protein] + ATP = O-phospho-L-seryl-[protein] + ADP + H(+). Its function is as follows. Serine/threonine-protein kinase component of macronutrients metabolism. Forms a functional kinase and phosphatase pair with PPM1K, serving as a metabolic regulatory node that coordinates branched-chain amino acids (BCAAs) with glucose and lipid metabolism via two distinct phosphoprotein targets: mitochondrial BCKDHA subunit of the branched-chain alpha-ketoacid dehydrogenase (BCKDH) complex and cytosolic ACLY, a lipogenic enzyme of Krebs cycle. Phosphorylates and inactivates mitochondrial BCKDH complex a multisubunit complex consisting of three multimeric components each involved in different steps of BCAA catabolism: E1 composed of BCKDHA and BCKDHB, E2 core composed of DBT monomers, and E3 composed of DLD monomers. Associates with the E2 component of BCKDH complex and phosphorylates BCKDHA on Ser-347, leading to conformational changes that interrupt substrate channeling between E1 and E2 and inactivates the BCKDH complex. Phosphorylates ACLY on Ser-455 in response to changes in cellular carbohydrate abundance such as occurs during fasting to feeding metabolic transition. Refeeding stimulates MLXIPL/ChREBP transcription factor, leading to increased BCKDK to PPM1K expression ratio, phosphorylation and activation of ACLY that ultimately results in the generation of malonyl-CoA and oxaloacetate immediate substrates of de novo lipogenesis and glucogenesis, respectively. Recognizes phosphosites having SxxE/D canonical motif. The protein is Branched-chain alpha-ketoacid dehydrogenase kinase (BCKDK) of Bos taurus (Bovine).